A 264-amino-acid chain; its full sequence is Glutamate racemase (264 aa).

Substrate is bound by residues 12-13 (DS) and 44-45 (YG). Catalysis depends on Cys-75, which acts as the Proton donor/acceptor. Residue 76 to 77 (NT) participates in substrate binding. Residue Cys-186 is the Proton donor/acceptor of the active site. 187 to 188 (TH) is a substrate binding site.

Belongs to the aspartate/glutamate racemases family.

The catalysed reaction is L-glutamate = D-glutamate. It functions in the pathway cell wall biogenesis; peptidoglycan biosynthesis. Provides the (R)-glutamate required for cell wall biosynthesis. The sequence is that of Glutamate racemase from Stutzerimonas stutzeri (strain A1501) (Pseudomonas stutzeri).